The sequence spans 436 residues: Trigger factor (436 aa).

The PPIase FKBP-type domain maps to 163–248 (TDRVIIDFAG…VKNVAEAILP (86 aa)).

The protein belongs to the FKBP-type PPIase family. Tig subfamily.

It is found in the cytoplasm. The catalysed reaction is [protein]-peptidylproline (omega=180) = [protein]-peptidylproline (omega=0). Involved in protein export. Acts as a chaperone by maintaining the newly synthesized protein in an open conformation. Functions as a peptidyl-prolyl cis-trans isomerase. In Laribacter hongkongensis (strain HLHK9), this protein is Trigger factor.